The following is a 145-amino-acid chain: 3-dehydroquinate dehydratase (145 aa).

Tyr-23 functions as the Proton acceptor in the catalytic mechanism. Substrate contacts are provided by Asn-74, His-80, and Asp-87. His-100 functions as the Proton donor in the catalytic mechanism. Substrate-binding positions include 101–102 and Arg-111; that span reads IS.

It belongs to the type-II 3-dehydroquinase family. In terms of assembly, homododecamer.

The catalysed reaction is 3-dehydroquinate = 3-dehydroshikimate + H2O. The protein operates within metabolic intermediate biosynthesis; chorismate biosynthesis; chorismate from D-erythrose 4-phosphate and phosphoenolpyruvate: step 3/7. Catalyzes a trans-dehydration via an enolate intermediate. The protein is 3-dehydroquinate dehydratase of Dictyoglomus turgidum (strain DSM 6724 / Z-1310).